Here is a 373-residue protein sequence, read N- to C-terminus: Packaging protein 3 (373 aa).

Positions 1-32 are disordered; the sequence is MHPVLRQMRPQPRATTASAAVALSGSGEQEEP. Residues 1–150 form an interaction with packaging protein 1 region; the sequence is MHPVLRQMRP…VTEERNFQKS (150 aa). A phosphoserine; by host mark is found at S52 and S334.

It belongs to the adenoviridae packaging protein 3 family. In terms of assembly, part of the genome packaging complex composed of packaging proteins 1, 2 and 3; this complex specifically binds to the packaging sequence on the left end of viral genomic DNA and performs packaging of the viral genome. Interacts with hexon-linking protein IIIa; this interaction is required to promote correct genome packaging. In terms of processing, cleaved at different sites by the viral protease during virion maturation.

The protein localises to the host nucleus. Involved in viral genome packaging through its interaction with packaging proteins 1 and 2. After proteolytic cleavage by adenovirus protease, L1 52/55k protein is removed from the capsid during viral maturation. This is Packaging protein 3 from Homo sapiens (Human).